The following is a 23-amino-acid chain: Keratin (23 aa).

The region spanning 1-23 (YSSQLAQVQGLIGNVESQLAEIR) is the IF rod domain. Positions 1 to 23 (YSSQLAQVQGLIGNVESQLAEIR) are coil 2.

This sequence belongs to the intermediate filament family.

This Cervus elaphus (Red deer) protein is Keratin.